The chain runs to 278 residues: Inositol oxygenase (278 aa).

Residues Arg-22 and 78–80 contribute to the substrate site; that span reads DES. Positions 91, 116, and 117 each coordinate Fe cation. Residues Lys-120 and 134 to 135 each bind substrate; that span reads GD. Fe cation-binding residues include His-187, His-213, and Asp-246. A substrate-binding site is contributed by 213-214; it reads HS.

Belongs to the myo-inositol oxygenase family. Requires Fe cation as cofactor.

It is found in the cytoplasm. The enzyme catalyses myo-inositol + O2 = D-glucuronate + H2O + H(+). Its pathway is polyol metabolism; myo-inositol degradation into D-glucuronate; D-glucuronate from myo-inositol: step 1/1. This is Inositol oxygenase (miox) from Danio rerio (Zebrafish).